The sequence spans 322 residues: Lung adenoma susceptibility protein 2 homolog (322 aa).

The first 31 residues, methionine 1 to serine 31, serve as a signal peptide directing secretion. The span at threonine 148–glycine 157 shows a compositional bias: basic residues. Disordered stretches follow at residues threonine 148–threonine 175 and phenylalanine 228–serine 248. Serine 161 carries the post-translational modification Phosphoserine. Positions serine 236 to lysine 247 are enriched in polar residues.

It localises to the secreted. Might play a role in cell proliferation. The polypeptide is Lung adenoma susceptibility protein 2 homolog (LAS2) (Macaca fascicularis (Crab-eating macaque)).